Here is a 586-residue protein sequence, read N- to C-terminus: Arginine--tRNA ligase (586 aa).

The 'HIGH' region signature appears at 128 to 138 (ANPTGPLHVGH).

It belongs to the class-I aminoacyl-tRNA synthetase family. In terms of assembly, monomer.

It localises to the cytoplasm. It carries out the reaction tRNA(Arg) + L-arginine + ATP = L-arginyl-tRNA(Arg) + AMP + diphosphate. This is Arginine--tRNA ligase from Thioalkalivibrio sulfidiphilus (strain HL-EbGR7).